A 350-amino-acid polypeptide reads, in one-letter code: 2-oxoglutarate-dependent ethylene/succinate-forming enzyme (350 aa).

Positions 166–286 constitute a Fe2OG dioxygenase domain; it reads GWHHMRVLRF…RFACAYFHEP (121 aa). The Fe cation site is built by His189 and His268.

The protein belongs to the iron/ascorbate-dependent oxidoreductase family. Monomer. The cofactor is Fe(2+).

The catalysed reaction is 2-oxoglutarate + O2 + 2 H(+) = ethene + 3 CO2 + H2O. The enzyme catalyses L-arginine + 2-oxoglutarate + O2 = guanidine + L-glutamate 5-semialdehyde + succinate + CO2. It participates in alkene biosynthesis; ethylene biosynthesis via 2-oxoglutarate. Its function is as follows. Simultaneously catalyzes two reactions, namely formation of ethylene and of succinate from 2-oxoglutarate. In Pseudomonas amygdali pv. sesami (Pseudomonas syringae pv. sesami), this protein is 2-oxoglutarate-dependent ethylene/succinate-forming enzyme (efe).